The sequence spans 644 residues: Major core protein OPG129 (644 aa).

Residues 1–61 constitute a propeptide that is removed on maturation; the sequence is MEAVVNSDVF…IVDDDFISAG (61 aa). The interval 61 to 80 is disordered; that stretch reads GARNQRTKPKRAGNDQAQQT.

Belongs to the orthopoxvirus OPG129 family. In terms of processing, the 73-kDa precursor is cleaved to a mature protein of 60 kDa during virion maturation. Proteolytic cleavage of major core proteins OPG129, OPG136, and OPG098, which occurs at a late stage of core formation, is required for production of infectious mature virions (MV).

It localises to the virion. In terms of biological role, major component of the virion core that undergoes proteolytic processing during the immature virion (IV) to mature virion (MV) transition. Essential for the formation of a structurally normal core. The sequence is that of Major core protein OPG129 (OPG129) from Variola virus (isolate Human/India/Ind3/1967) (VARV).